A 422-amino-acid polypeptide reads, in one-letter code: Metallocarboxypeptidase A-like protein TRV_02598 (422 aa).

A signal peptide spans 1–16 (MQSLLLLATLLGSALG). Positions 17–119 (GAIPSQSANY…ELLTLDGGAN (103 aa)) are cleaved as a propeptide — activation peptide. In terms of domain architecture, Peptidase M14 spans 125 to 421 (SYHKYEDHLK…AGVKAMFSKL (297 aa)). Zn(2+)-binding residues include His-185 and Glu-188. Residues 185–188 (HARE), Arg-240, and 256–257 (NR) contribute to the substrate site. A disulfide bridge links Cys-250 with Cys-273. Residue His-311 participates in Zn(2+) binding. 312-313 (SY) contributes to the substrate binding site. Glu-387 functions as the Proton donor/acceptor in the catalytic mechanism.

The protein belongs to the peptidase M14 family. It depends on Zn(2+) as a cofactor.

It is found in the secreted. Its function is as follows. Extracellular metalloprotease that contributes to pathogenicity. The polypeptide is Metallocarboxypeptidase A-like protein TRV_02598 (Trichophyton verrucosum (strain HKI 0517)).